We begin with the raw amino-acid sequence, 570 residues long: Nucleoprotein (570 aa).

Residues 54 to 236 form a binding site for the cap structure m7GTP region; sequence LRKTKRTDDD…ITKEESSINI (183 aa). Residues 332–356 form a disordered region; the sequence is DLTKKPDAVPEPGAAPRPAERKGQN. The Mg(2+) site is built by Asp-386 and Glu-388. Positions 386 and 388 each coordinate Mn(2+). The Zn(2+) site is built by Glu-396, Cys-503, His-506, and Cys-531. Asp-535 lines the Mg(2+) pocket. Asp-535 contacts Mn(2+).

This sequence belongs to the arenaviridae nucleocapsid protein family. In terms of assembly, homomultimerizes to form the nucleocapsid. Binds to viral genomic RNA. Interacts with glycoprotein G2. Interacts with protein Z; this interaction probably directs the encapsidated genome to budding sites. Interacts with protein L; this interaction does not interfere with Z-L interaction. Interacts with host IKBKE (via Protein kinase domain); the interaction inhibits IKBKE kinase activity.

The protein localises to the virion. Its subcellular location is the host cytoplasm. Functionally, encapsidates the genome, protecting it from nucleases. The encapsidated genomic RNA is termed the nucleocapsid (NC). Serves as template for viral transcription and replication. The increased presence of protein N in host cell does not seem to trigger the switch from transcription to replication as observed in other negative strain RNA viruses. Through the interaction with host IKBKE, strongly inhibits the phosphorylation and nuclear translocation of host IRF3, a protein involved in interferon activation pathway, leading to the inhibition of interferon-beta and IRF3-dependent promoters activation. Also encodes a functional 3'-5' exoribonuclease that degrades preferentially dsRNA substrates and thereby participates in the suppression of interferon induction. The polypeptide is Nucleoprotein (Artibeus (neotropical fruit bats)).